We begin with the raw amino-acid sequence, 212 residues long: Methylthioribulose-1-phosphate dehydratase (212 aa).

Positions 97 and 99 each coordinate Zn(2+).

It belongs to the aldolase class II family. MtnB subfamily. In terms of assembly, homotetramer. Zn(2+) serves as cofactor.

It catalyses the reaction 5-(methylsulfanyl)-D-ribulose 1-phosphate = 5-methylsulfanyl-2,3-dioxopentyl phosphate + H2O. It functions in the pathway amino-acid biosynthesis; L-methionine biosynthesis via salvage pathway; L-methionine from S-methyl-5-thio-alpha-D-ribose 1-phosphate: step 2/6. Functionally, catalyzes the dehydration of methylthioribulose-1-phosphate (MTRu-1-P) into 2,3-diketo-5-methylthiopentyl-1-phosphate (DK-MTP-1-P). This Bacillus cereus (strain AH187) protein is Methylthioribulose-1-phosphate dehydratase.